A 276-amino-acid chain; its full sequence is Thiazole synthase (276 aa).

K112 (schiff-base intermediate with DXP) is an active-site residue. 1-deoxy-D-xylulose 5-phosphate-binding positions include G173, 199–200 (AG), and 221–222 (NT).

The protein belongs to the ThiG family. As to quaternary structure, homotetramer. Forms heterodimers with either ThiH or ThiS.

Its subcellular location is the cytoplasm. It carries out the reaction [ThiS sulfur-carrier protein]-C-terminal-Gly-aminoethanethioate + 2-iminoacetate + 1-deoxy-D-xylulose 5-phosphate = [ThiS sulfur-carrier protein]-C-terminal Gly-Gly + 2-[(2R,5Z)-2-carboxy-4-methylthiazol-5(2H)-ylidene]ethyl phosphate + 2 H2O + H(+). It participates in cofactor biosynthesis; thiamine diphosphate biosynthesis. In terms of biological role, catalyzes the rearrangement of 1-deoxy-D-xylulose 5-phosphate (DXP) to produce the thiazole phosphate moiety of thiamine. Sulfur is provided by the thiocarboxylate moiety of the carrier protein ThiS. In vitro, sulfur can be provided by H(2)S. This chain is Thiazole synthase, found in Synechococcus sp. (strain ATCC 27144 / PCC 6301 / SAUG 1402/1) (Anacystis nidulans).